Reading from the N-terminus, the 478-residue chain is Sulfate adenylyltransferase subunit 1 (478 aa).

The tr-type G domain occupies 24-240 (KSLLRFLTCG…VLENVDIDAD (217 aa)). Residues 33-40 (GSVDDGKS) are G1. GTP is bound at residue 33–40 (GSVDDGKS). Residues 91–95 (GITID) form a G2 region. Residues 112–115 (DTPG) form a G3 region. GTP contacts are provided by residues 112–116 (DTPGH) and 167–170 (NKMD). The interval 167–170 (NKMD) is G4. A G5 region spans residues 206–208 (SAL).

It belongs to the TRAFAC class translation factor GTPase superfamily. Classic translation factor GTPase family. CysN/NodQ subfamily. Heterodimer composed of CysD, the smaller subunit, and CysN.

It catalyses the reaction sulfate + ATP + H(+) = adenosine 5'-phosphosulfate + diphosphate. The protein operates within sulfur metabolism; hydrogen sulfide biosynthesis; sulfite from sulfate: step 1/3. Functionally, with CysD forms the ATP sulfurylase (ATPS) that catalyzes the adenylation of sulfate producing adenosine 5'-phosphosulfate (APS) and diphosphate, the first enzymatic step in sulfur assimilation pathway. APS synthesis involves the formation of a high-energy phosphoric-sulfuric acid anhydride bond driven by GTP hydrolysis by CysN coupled to ATP hydrolysis by CysD. This chain is Sulfate adenylyltransferase subunit 1, found in Aliivibrio fischeri (strain MJ11) (Vibrio fischeri).